Consider the following 426-residue polypeptide: Trophoblast glycoprotein (426 aa).

A signal peptide spans 1–31; that stretch reads MPGAGSRGPSAGDGRLRLARLALVLLGWVSA. The Extracellular portion of the chain corresponds to 32-361; the sequence is SAPSSSVPSS…AVLPQSLQTS (330 aa). Low complexity predominate over residues 33–47; it reads APSSSVPSSSTSPAA. Positions 33–53 are disordered; sequence APSSSVPSSSTSPAAFLASGS. One can recognise an LRRNT domain in the interval 53-91; sequence SAQPPPAERCPAACECSEAARTVKCVNRNLLEVPADLPP. 2 disulfide bridges follow: Cys62-Cys68 and Cys66-Cys77. LRR repeat units lie at residues 92-113, 116-139, 141-163, 172-210, 215-238, 239-261, and 262-281; these read YVRNLFLTGNQMTVLPAGAFAR, PLADLEALNLSGNHLKEVCAGAFE, LPGLRRLDLSHNPLTNLSAFAFA, PSPLEELILNHIVPPEDQRQNGSFEGMVAFEGMVAAALR, LRGLTRLELASNHFLFLPRDLLAQ, LPSLRYLDLRNNSLVSLTYASFR, and NLTHLESLHLEDNALKVLHN. N-linked (GlcNAc...) asparagine glycosylation occurs at Asn124. N-linked (GlcNAc...) asparagine glycosylation is present at Asn281. In terms of domain architecture, LRRCT spans 289-352; that stretch reads GLAHVKVFLD…LNSSDLDCDA (64 aa). 2 disulfides stabilise this stretch: Cys304/Cys329 and Cys306/Cys350. The helical transmembrane segment at 362-382 threads the bilayer; it reads YVFLGIVLALIGAIFLLVLYL. Residues 383-426 lie on the Cytoplasmic side of the membrane; the sequence is NRKGIKKWMHNIRDACRDHMEGYHYRYEINADPRLTNLSSNSDV. Phosphoserine is present on Ser424.

In terms of processing, highly glycosylated. In terms of tissue distribution, highly expressed in embryo and placenta. In adult, expressed only in brain and ovary. Not detected in kidney small intestine, heart, spleen, testis, liver, lung, thymus and stomach.

It localises to the cell membrane. Its function is as follows. May function as an inhibitor of Wnt/beta-catenin signaling by indirectly interacting with LRP6 and blocking Wnt3a-dependent LRP6 internalization. The sequence is that of Trophoblast glycoprotein (Tpbg) from Mus musculus (Mouse).